The chain runs to 641 residues: Glycerol metabolism operon regulatory protein (641 aa).

The interval 1–318 (MTTHTQDIGK…MRQLMTSQLG (318 aa)) is sensor domain. The 138-residue stretch at 52 to 189 (ALLTIAQAAL…AIAREVGNSL (138 aa)) folds into the GAF domain. Residues 203–265 (NQMYGLLESM…MLLRRAIKHA (63 aa)) enclose the PAS domain. In terms of domain architecture, Sigma-54 factor interaction spans 327–552 (MSTDDPETRR…LNSIIENIAI (226 aa)). Residues 355–362 (GEEGVGKE) and 415–424 (ANGGTLFLEK) each bind ATP.

In terms of biological role, transcriptional activator of the glycerol utilization dha operon. This chain is Glycerol metabolism operon regulatory protein, found in Citrobacter freundii.